We begin with the raw amino-acid sequence, 284 residues long: 2-dehydro-3-deoxyphosphooctonate aldolase (284 aa).

The protein belongs to the KdsA family.

Its subcellular location is the cytoplasm. The catalysed reaction is D-arabinose 5-phosphate + phosphoenolpyruvate + H2O = 3-deoxy-alpha-D-manno-2-octulosonate-8-phosphate + phosphate. Its pathway is carbohydrate biosynthesis; 3-deoxy-D-manno-octulosonate biosynthesis; 3-deoxy-D-manno-octulosonate from D-ribulose 5-phosphate: step 2/3. It functions in the pathway bacterial outer membrane biogenesis; lipopolysaccharide biosynthesis. This Edwardsiella ictaluri (strain 93-146) protein is 2-dehydro-3-deoxyphosphooctonate aldolase.